We begin with the raw amino-acid sequence, 429 residues long: FAD-dependent monooxygenase azaH (429 aa).

The chain crosses the membrane as a helical span at residues Ser5–Leu25. The FAD site is built by Glu35 and Gly48. N-linked (GlcNAc...) asparagine glycosylation is found at Asn75 and Asn87. Arg116 serves as a coordination point for FAD. Residue Arg199 is part of the active site. Residues Asp315 and Ala328 each coordinate FAD.

The protein belongs to the paxM FAD-dependent monooxygenase family. The cofactor is FAD.

Its subcellular location is the membrane. Its pathway is secondary metabolite biosynthesis. Functionally, FAD-dependent monooxygenase; part of the gene cluster that mediates the biosynthesis of azaphilones, a class of fungal metabolites characterized by a highly oxygenated pyrano-quinone bicyclic core and exhibiting a broad range of bioactivities. In the first step, the non-reducing polyketide synthase azaA forms the hexaketide precursor from successive condensations of five malonyl-CoA units, presumably with a simple acetyl-CoA starter unit. The reactive polyketide chain then undergoes a PT-mediated C2-C7 cyclization to afford the aromatic ring and is eventually released as an aldehyde through the R-domain. The putative ketoreductase azaE is proposed to catalyze the reduction of the terminal ketone resulting in the early culture product FK17-P2a. The monooxygenase azaH was demonstrated to be the only enzyme required to convert FK17-P2a to azanigerone E. AzaH first hydroxylates the benzaldehyde intermediate FK17-P2a at C4, which triggers the formation of the pyran-ring to afford azanigerone E. In parallel, the 2,4-dimethylhexanoyl chain is synthesized by the HR-PKS azaB and is proposed to be transferred to the C4-hydroxyl of azanigerone E by the acyltransferase azaD directly from the ACP domain of azaB. Alternatively, the 2,4-dimethyl-hexanoyl chain may be offloaded from the HR-PKS as a carboxylic acid and converted to an acyl-CoA by azaF. The resulting acyl-CoA molecule could then be taken up as a substrate by AzaD to form azanigerone B. To yield the carboxylic acid substituent in azanigerone A, the hydroxypropyl side chain of azanigerone B would need to undergo a C-C oxidative cleavage catalyzed by cytochrome P450 AzaI. AzaI is proposed to act on a vicinal diol that leads to a C-C bond scission either through an alkoxyradical intermediate or a peroxy complex. In the biosynthesis of azanigerone A, azanigerone B first undergoes hydroxylation at C10, possibly catalyzed by one of the two FAD-dependent monooxygenases encoded in the cluster, azaG or azaL, resulting in the vicinal diol azanigerone C. Oxidative cleavage of azanigerone C by azaI would yield the corresponding aldehyde derivative of azanigerone A. Finally, the dehydrogenase azaJ is proposed to convert the aldehyde functional group into the carboxylic acid, completing the conversion from azanigerone B to azanigerone A. Alternatively, the oxidation of aldehyde to carboxylic acid may be catalyzed by the same P450 enzyme azaI via consecutive oxidation or by endogenous alcohol dehydrogenase. In Aspergillus niger (strain ATCC 1015 / CBS 113.46 / FGSC A1144 / LSHB Ac4 / NCTC 3858a / NRRL 328 / USDA 3528.7), this protein is FAD-dependent monooxygenase azaH.